We begin with the raw amino-acid sequence, 96 residues long: uncharacterized protein (96 aa).

Its subcellular location is the mitochondrion. This is an uncharacterized protein from Saccharomyces cerevisiae (strain ATCC 204508 / S288c) (Baker's yeast).